The chain runs to 127 residues: Aspartate 1-decarboxylase (127 aa).

Catalysis depends on Ser-25, which acts as the Schiff-base intermediate with substrate; via pyruvic acid. At Ser-25 the chain carries Pyruvic acid (Ser). Position 57 (Thr-57) interacts with substrate. Tyr-58 acts as the Proton donor in catalysis. Substrate is bound at residue 73–75 (GAA).

Belongs to the PanD family. In terms of assembly, heterooctamer of four alpha and four beta subunits. Requires pyruvate as cofactor. Post-translationally, is synthesized initially as an inactive proenzyme, which is activated by self-cleavage at a specific serine bond to produce a beta-subunit with a hydroxyl group at its C-terminus and an alpha-subunit with a pyruvoyl group at its N-terminus.

The protein localises to the cytoplasm. It carries out the reaction L-aspartate + H(+) = beta-alanine + CO2. It participates in cofactor biosynthesis; (R)-pantothenate biosynthesis; beta-alanine from L-aspartate: step 1/1. Catalyzes the pyruvoyl-dependent decarboxylation of aspartate to produce beta-alanine. The polypeptide is Aspartate 1-decarboxylase (Clostridium botulinum (strain Okra / Type B1)).